We begin with the raw amino-acid sequence, 336 residues long: CENP-A histone chaperone scm3 (336 aa).

The interval 243–269 (RRRNPLLSSPKTPLRRSFSKSKVRNSN) is disordered. Residues 255–269 (PLRRSFSKSKVRNSN) show a composition bias toward basic residues.

It localises to the cytoplasm. The protein localises to the nucleus. Centromeric protein that plays a central role in the incorporation and maintenance of histone H3-like variant CENPA at centromeres. The protein is CENP-A histone chaperone scm3 of Schizosaccharomyces pombe (strain 972 / ATCC 24843) (Fission yeast).